The sequence spans 869 residues: Dimethylglycine dehydrogenase, mitochondrial (869 aa).

A mitochondrion-targeting transit peptide spans 1–43 (MLRPGALRLRGLALRGSPRRPSSAGLREGQESPASPPEWKDRA). The tract at residues 14 to 39 (LRGSPRRPSSAGLREGQESPASPPEW) is disordered. FAD-binding positions include 52–53 (CV), 73–74 (EK), and 80–88 (GSTWHAAGL). Tele-8alpha-FAD histidine is present on H84. Residue K107 is modified to N6-acetyllysine. An N6-acetyllysine; alternate modification is found at K141. At K141 the chain carries N6-succinyllysine; alternate. K161 bears the N6-acetyllysine mark. V212 is a binding site for FAD. An N6-acetyllysine modification is found at K216. Position 244 (W244) interacts with FAD. K310 and K312 each carry N6-succinyllysine. K328 and K353 each carry N6-acetyllysine. 390–395 (FGYGII) is an FAD binding site. N6-acetyllysine; alternate is present on residues K427, K469, and K516. Residues K427, K469, and K516 each carry the N6-succinyllysine; alternate modification. 573–575 (ELT) is a binding site for (6S)-5,6,7,8-tetrahydrofolate. N6-acetyllysine; alternate is present on K648. N6-succinyllysine; alternate is present on K648. (6S)-5,6,7,8-tetrahydrofolate contacts are provided by residues Y669, 676–678 (ELY), and Y737. K757 carries the N6-acetyllysine modification. K786 carries the N6-acetyllysine; alternate modification. K786 is subject to N6-succinyllysine; alternate. Position 788 is an N6-succinyllysine (K788).

The protein belongs to the GcvT family. Requires FAD as cofactor.

The protein resides in the mitochondrion. The catalysed reaction is (6S)-5,6,7,8-tetrahydrofolyl-(gamma-L-Glu)(n) + N,N-dimethylglycine + oxidized [electron-transfer flavoprotein] + H(+) = (6R)-5,10-methylenetetrahydrofolyl-(gamma-L-Glu)(n) + sarcosine + reduced [electron-transfer flavoprotein]. It functions in the pathway amine and polyamine degradation; betaine degradation; sarcosine from betaine: step 2/2. Its function is as follows. Catalyzes the demethylation of N,N-dimethylglycine to sarcosine. Also has activity with sarcosine in vitro. The sequence is that of Dimethylglycine dehydrogenase, mitochondrial (Dmgdh) from Mus musculus (Mouse).